The chain runs to 226 residues: Leucyl/phenylalanyl-tRNA--protein transferase (226 aa).

The protein belongs to the L/F-transferase family.

It localises to the cytoplasm. It carries out the reaction N-terminal L-lysyl-[protein] + L-leucyl-tRNA(Leu) = N-terminal L-leucyl-L-lysyl-[protein] + tRNA(Leu) + H(+). The enzyme catalyses N-terminal L-arginyl-[protein] + L-leucyl-tRNA(Leu) = N-terminal L-leucyl-L-arginyl-[protein] + tRNA(Leu) + H(+). It catalyses the reaction L-phenylalanyl-tRNA(Phe) + an N-terminal L-alpha-aminoacyl-[protein] = an N-terminal L-phenylalanyl-L-alpha-aminoacyl-[protein] + tRNA(Phe). Functionally, functions in the N-end rule pathway of protein degradation where it conjugates Leu, Phe and, less efficiently, Met from aminoacyl-tRNAs to the N-termini of proteins containing an N-terminal arginine or lysine. The polypeptide is Leucyl/phenylalanyl-tRNA--protein transferase (Pseudomonas aeruginosa (strain UCBPP-PA14)).